The primary structure comprises 241 residues: LexA repressor (241 aa).

Positions 41–61 (FREIGNAAGLKSPSSVKHQLQ) form a DNA-binding region, H-T-H motif. Catalysis depends on for autocatalytic cleavage activity residues serine 165 and lysine 202.

It belongs to the peptidase S24 family. In terms of assembly, homodimer.

It carries out the reaction Hydrolysis of Ala-|-Gly bond in repressor LexA.. Represses a number of genes involved in the response to DNA damage (SOS response), including recA and lexA. In the presence of single-stranded DNA, RecA interacts with LexA causing an autocatalytic cleavage which disrupts the DNA-binding part of LexA, leading to derepression of the SOS regulon and eventually DNA repair. The sequence is that of LexA repressor from Bifidobacterium longum subsp. infantis (strain ATCC 15697 / DSM 20088 / JCM 1222 / NCTC 11817 / S12).